A 324-amino-acid polypeptide reads, in one-letter code: Protein GET4 (324 aa).

It belongs to the GET4 family. In terms of assembly, interacts with GET3A.

The protein resides in the cytoplasm. The protein localises to the cytosol. Its function is as follows. Involved in the regulation of root hair growth. This chain is Protein GET4, found in Arabidopsis thaliana (Mouse-ear cress).